A 153-amino-acid chain; its full sequence is Putative riboflavin kinase (153 aa).

The Mg(2+) site is built by threonine 28 and asparagine 30. Glutamate 80 acts as the Nucleophile in catalysis.

Monomer. Zn(2+) is required as a cofactor. The cofactor is Mg(2+).

The protein localises to the cytoplasm. It carries out the reaction riboflavin + ATP = FMN + ADP + H(+). It functions in the pathway cofactor biosynthesis; FMN biosynthesis; FMN from riboflavin (ATP route): step 1/1. Functionally, catalyzes the phosphorylation of riboflavin (vitamin B2) to form flavin-mononucleotide (FMN). This Drosophila melanogaster (Fruit fly) protein is Putative riboflavin kinase.